A 327-amino-acid polypeptide reads, in one-letter code: Glycerol-3-phosphate acyltransferase (327 aa).

The next 5 helical transmembrane spans lie at 3–23, 52–72, 78–98, 112–132, and 152–172; these read SLLW…LLFA, VGVL…AVAL, TVFH…SCFL, VFLP…LAVI, and MLLL…MVLV. Disordered regions lie at residues 184–212 and 233–327; these read SRGE…EAAA and PSTE…SSGQ. Over residues 199–212 the composition is skewed to low complexity; that stretch reads AQGTDAGAAPEAAA. A compositionally biased stretch (polar residues) spans 237–246; it reads AAPSQETSDA. Basic and acidic residues predominate over residues 259–271; it reads EGDKRENEEHDNA.

Belongs to the PlsY family. Probably interacts with PlsX.

Its subcellular location is the cell inner membrane. The catalysed reaction is an acyl phosphate + sn-glycerol 3-phosphate = a 1-acyl-sn-glycero-3-phosphate + phosphate. It functions in the pathway lipid metabolism; phospholipid metabolism. Functionally, catalyzes the transfer of an acyl group from acyl-phosphate (acyl-PO(4)) to glycerol-3-phosphate (G3P) to form lysophosphatidic acid (LPA). This enzyme utilizes acyl-phosphate as fatty acyl donor, but not acyl-CoA or acyl-ACP. In Nitratidesulfovibrio vulgaris (strain ATCC 29579 / DSM 644 / CCUG 34227 / NCIMB 8303 / VKM B-1760 / Hildenborough) (Desulfovibrio vulgaris), this protein is Glycerol-3-phosphate acyltransferase.